A 93-amino-acid chain; its full sequence is Bacterial microcompartment shell protein PduA (93 aa).

The 85-residue stretch at 5–89 (ALGMVETKGL…PHTDVEKILP (85 aa)) folds into the BMC domain.

It belongs to the bacterial microcompartments protein family. As to quaternary structure, homohexamer with a central pore; Lys-26 and Arg-79 interactions are very important for hexamer symmetry. The hexamers pack against each other in arrays. Interacts individually with shell proteins PduB, PduB', PduJ, PduK, PduN and PduU. Modeling suggests PduC, PduD, PduE, PduL and PduP interact with a cleft formed by the C-terminal segments of 2 adjacent PduA subunits (on the BMC luminal side) in the hexamer.

Its subcellular location is the bacterial microcompartment. It functions in the pathway polyol metabolism; 1,2-propanediol degradation. In terms of biological role, one of the major shell proteins of the bacterial microcompartment (BMC) dedicated to 1,2-propanediol (1,2-PD) degradation, probably important for metabolite diffusion into and out of the BMC. Overexpression of a C-terminally mutated form (PduA*) makes thin parallel filaments with a honeycomb-like assembly in cross-section that probably form nanotubes. The filaments interfere with septation. PduA is probably the hub for binding multiple enzymes to the interior of the BMC. At least one of PduA or PduJ is required for BMC assembly; it must be encoded as the first gene in the pdu operon. Expression of a cosmid containing the full 21-gene pdu operon in E.coli allows E.coli to grow on 1,2-PD with the appearance of BMCs in its cytoplasm. Overexpression of this protein leads to aberrant intracellular filaments. Its function is as follows. The 1,2-PD-specific bacterial microcompartment (BMC) concentrates low levels of 1,2-PD catabolic enzymes, concentrates volatile reaction intermediates thus enhancing pathway flux and keeps the level of toxic, mutagenic propionaldehyde low. The chain is Bacterial microcompartment shell protein PduA from Citrobacter freundii.